Reading from the N-terminus, the 360-residue chain is Phospho-N-acetylmuramoyl-pentapeptide-transferase (360 aa).

The Periplasmic segment spans residues 1-25 (MLVWLAEHLVKYYSGFNVFSYLTFR). A helical membrane pass occupies residues 26 to 46 (AIVSLLTALFISLWMGPRMIA). Topologically, residues 47–71 (RLQKLSFGQVVRNDGPESHFSKRGT) are cytoplasmic. A helical transmembrane segment spans residues 72 to 92 (PTMGGIMILTAIVISVLLWAY). A topological domain (periplasmic) is located at residue Pro-93. Residues 94–114 (SNPYVWCVLVVLIGYGIIGFV) traverse the membrane as a helical segment. Over 115–131 (DDYRKVVRKDTKGLIAR) the chain is Cytoplasmic. Residues 132–152 (WKYFWMSVIALGVAFALYLVG) form a helical membrane-spanning segment. Topologically, residues 153-167 (KDTPATQLVVPFFKD) are periplasmic. A helical transmembrane segment spans residues 168 to 188 (VMPQLGLFYILLSYFVIVGTG). The Cytoplasmic segment spans residues 189–198 (NAVNLTDGLD). A helical transmembrane segment spans residues 199–219 (GLAIMPTVFVAAGFALVAWAT). Topologically, residues 220–235 (GNMNFANYLHIPYLRH) are periplasmic. Residues 236-256 (AGELVIVCTAIVGAGLGFLWF) form a helical membrane-spanning segment. At 257–262 (NTYPAQ) the chain is on the cytoplasmic side. Residues 263–283 (VFMGDVGSLALGGALGIIAVL) form a helical membrane-spanning segment. Residues 284-287 (LRQE) are Periplasmic-facing. A helical transmembrane segment spans residues 288 to 308 (FLLVIMGGVFVVETLSVILQV). At 309 to 337 (GSFKLRGQRIFRMAPIHHHYELKGWPEPR) the chain is on the cytoplasmic side. The chain crosses the membrane as a helical span at residues 338-358 (VIVRFWIISLMLVLIGLATLK). Residues 359–360 (VR) lie on the Periplasmic side of the membrane.

Belongs to the glycosyltransferase 4 family. MraY subfamily. The cofactor is Mg(2+).

The protein localises to the cell inner membrane. The enzyme catalyses UDP-N-acetyl-alpha-D-muramoyl-L-alanyl-gamma-D-glutamyl-meso-2,6-diaminopimeloyl-D-alanyl-D-alanine + di-trans,octa-cis-undecaprenyl phosphate = di-trans,octa-cis-undecaprenyl diphospho-N-acetyl-alpha-D-muramoyl-L-alanyl-D-glutamyl-meso-2,6-diaminopimeloyl-D-alanyl-D-alanine + UMP. The protein operates within cell wall biogenesis; peptidoglycan biosynthesis. Catalyzes the initial step of the lipid cycle reactions in the biosynthesis of the cell wall peptidoglycan: transfers peptidoglycan precursor phospho-MurNAc-pentapeptide from UDP-MurNAc-pentapeptide onto the lipid carrier undecaprenyl phosphate, yielding undecaprenyl-pyrophosphoryl-MurNAc-pentapeptide, known as lipid I. This Salmonella agona (strain SL483) protein is Phospho-N-acetylmuramoyl-pentapeptide-transferase.